A 121-amino-acid chain; its full sequence is Large ribosomal subunit protein uL14 (121 aa).

It belongs to the universal ribosomal protein uL14 family. Part of the 50S ribosomal subunit. Forms a cluster with proteins L3 and L19. In the 70S ribosome, L14 and L19 interact and together make contacts with the 16S rRNA in bridges B5 and B8.

Functionally, binds to 23S rRNA. Forms part of two intersubunit bridges in the 70S ribosome. The chain is Large ribosomal subunit protein uL14 from Akkermansia muciniphila (strain ATCC BAA-835 / DSM 22959 / JCM 33894 / BCRC 81048 / CCUG 64013 / CIP 107961 / Muc).